Reading from the N-terminus, the 618-residue chain is Uptake hydrogenase large subunit (618 aa).

Ni(2+)-binding residues include Cys-75, Cys-78, Cys-597, and Cys-600.

The protein belongs to the [NiFe]/[NiFeSe] hydrogenase large subunit family. In terms of assembly, heterodimer of a large and a small subunit. Requires Ni(2+) as cofactor.

It is found in the cell membrane. The catalysed reaction is H2 + A = AH2. In terms of biological role, this enzyme recycles the H(2) produced by nitrogenase to increase the production of ATP and to protect nitrogenase against inhibition or damage by O(2) under carbon- or phosphate-limited conditions. This is Uptake hydrogenase large subunit (hoxG) from Cupriavidus necator (strain ATCC 17699 / DSM 428 / KCTC 22496 / NCIMB 10442 / H16 / Stanier 337) (Ralstonia eutropha).